A 408-amino-acid chain; its full sequence is 26S proteasome regulatory subunit 6B homolog (408 aa).

An N-acetylalanine modification is found at Ala2. The residue at position 16 (Ser16) is a Phosphoserine. The stretch at Glu28–Val75 forms a coiled coil. Gly196 to Thr203 contributes to the ATP binding site.

This sequence belongs to the AAA ATPase family. As to quaternary structure, component of the 19S regulatory particle (RP/PA700) base subcomplex of the 26S proteasome. The 26S proteasome is composed of a core protease (CP), known as the 20S proteasome, capped at one or both ends by the 19S regulatory particle (RP/PA700). The RP/PA700 complex is composed of at least 17 different subunits in two subcomplexes, the base and the lid, which form the portions proximal and distal to the 20S proteolytic core, respectively. In terms of tissue distribution, expressed in dark-grown etiolated seedlings, roots, leaves, stems and flowers.

Its subcellular location is the cytoplasm. The protein localises to the nucleus. Its function is as follows. The 26S proteasome is involved in the ATP-dependent degradation of ubiquitinated proteins. The regulatory (or ATPase) complex confers ATP dependency and substrate specificity to the 26S complex. This chain is 26S proteasome regulatory subunit 6B homolog (RPT3), found in Arabidopsis thaliana (Mouse-ear cress).